The sequence spans 283 residues: Pantothenate synthetase (283 aa).

An ATP-binding site is contributed by 30-37 (MGYLHDGH). The Proton donor role is filled by His-37. Position 61 (Gln-61) interacts with (R)-pantoate. Gln-61 serves as a coordination point for beta-alanine. An ATP-binding site is contributed by 147–150 (GKKD). Position 153 (Gln-153) interacts with (R)-pantoate. Residues Ile-176 and 184–187 (MSSR) each bind ATP.

This sequence belongs to the pantothenate synthetase family. In terms of assembly, homodimer.

It localises to the cytoplasm. It carries out the reaction (R)-pantoate + beta-alanine + ATP = (R)-pantothenate + AMP + diphosphate + H(+). It participates in cofactor biosynthesis; (R)-pantothenate biosynthesis; (R)-pantothenate from (R)-pantoate and beta-alanine: step 1/1. Functionally, catalyzes the condensation of pantoate with beta-alanine in an ATP-dependent reaction via a pantoyl-adenylate intermediate. This is Pantothenate synthetase from Geobacter sulfurreducens (strain ATCC 51573 / DSM 12127 / PCA).